The following is a 216-amino-acid chain: Probable GTP-binding protein EngB (216 aa).

The region spanning Asp-43–Thr-216 is the EngB-type G domain. GTP is bound by residues Gly-51–Ser-58, Gly-78–Glu-82, Asp-96–Gly-99, Thr-163–Asp-166, and Thr-197–Ser-199. The Mg(2+) site is built by Ser-58 and Thr-80.

The protein belongs to the TRAFAC class TrmE-Era-EngA-EngB-Septin-like GTPase superfamily. EngB GTPase family. Mg(2+) serves as cofactor.

In terms of biological role, necessary for normal cell division and for the maintenance of normal septation. In Roseobacter denitrificans (strain ATCC 33942 / OCh 114) (Erythrobacter sp. (strain OCh 114)), this protein is Probable GTP-binding protein EngB.